The following is a 54-amino-acid chain: Large ribosomal subunit protein bL33B (54 aa).

It belongs to the bacterial ribosomal protein bL33 family.

The polypeptide is Large ribosomal subunit protein bL33B (Mycobacterium sp. (strain KMS)).